The following is a 101-amino-acid chain: Large ribosomal subunit protein uL24 (101 aa).

It belongs to the universal ribosomal protein uL24 family. In terms of assembly, part of the 50S ribosomal subunit.

In terms of biological role, one of two assembly initiator proteins, it binds directly to the 5'-end of the 23S rRNA, where it nucleates assembly of the 50S subunit. One of the proteins that surrounds the polypeptide exit tunnel on the outside of the subunit. The sequence is that of Large ribosomal subunit protein uL24 from Thermobifida fusca (strain YX).